The sequence spans 341 residues: Beta-ketoacyl-[acyl-carrier-protein] synthase III 1 (341 aa).

Residues Cys113 and His249 contribute to the active site. The segment at Gln250 to Arg254 is ACP-binding. The active site involves Asn279.

The protein belongs to the thiolase-like superfamily. FabH family. Homodimer.

The protein resides in the cytoplasm. It carries out the reaction malonyl-[ACP] + acetyl-CoA + H(+) = 3-oxobutanoyl-[ACP] + CO2 + CoA. The protein operates within lipid metabolism; fatty acid biosynthesis. Functionally, catalyzes the condensation reaction of fatty acid synthesis by the addition to an acyl acceptor of two carbons from malonyl-ACP. Catalyzes the first condensation reaction which initiates fatty acid synthesis and may therefore play a role in governing the total rate of fatty acid production. Possesses both acetoacetyl-ACP synthase and acetyl transacylase activities. Its substrate specificity determines the biosynthesis of branched-chain and/or straight-chain of fatty acids. This Deinococcus radiodurans (strain ATCC 13939 / DSM 20539 / JCM 16871 / CCUG 27074 / LMG 4051 / NBRC 15346 / NCIMB 9279 / VKM B-1422 / R1) protein is Beta-ketoacyl-[acyl-carrier-protein] synthase III 1.